Here is a 198-residue protein sequence, read N- to C-terminus: Transmembrane protein 17 (198 aa).

A glycan (N-linked (GlcNAc...) asparagine) is linked at asparagine 13. 4 consecutive transmembrane segments (helical) span residues 47 to 67, 78 to 98, 110 to 130, and 142 to 162; these read LYFN…MLHL, FIVI…LYLG, LAGF…FLLL, and AIHS…FLTL.

The protein belongs to the TMEM17 family. In terms of assembly, part of the tectonic-like complex (also named B9 complex).

It localises to the cell projection. Its subcellular location is the cilium membrane. Transmembrane component of the tectonic-like complex, a complex localized at the transition zone of primary cilia and acting as a barrier that prevents diffusion of transmembrane proteins between the cilia and plasma membranes. Required for ciliogenesis and sonic hedgehog/SHH signaling. The polypeptide is Transmembrane protein 17 (Tmem17) (Rattus norvegicus (Rat)).